Here is a 497-residue protein sequence, read N- to C-terminus: 3-octaprenyl-4-hydroxybenzoate carboxy-lyase (497 aa).

Asn-175 contacts Mn(2+). Prenylated FMN contacts are provided by residues 178–180 (IYR), 192–194 (RWL), and 197–198 (RG). Position 241 (Glu-241) interacts with Mn(2+). Catalysis depends on Asp-290, which acts as the Proton donor.

Belongs to the UbiD family. Homohexamer. Prenylated FMN serves as cofactor. Mn(2+) is required as a cofactor.

Its subcellular location is the cell membrane. It catalyses the reaction a 4-hydroxy-3-(all-trans-polyprenyl)benzoate + H(+) = a 2-(all-trans-polyprenyl)phenol + CO2. It participates in cofactor biosynthesis; ubiquinone biosynthesis. Its function is as follows. Catalyzes the decarboxylation of 3-octaprenyl-4-hydroxy benzoate to 2-octaprenylphenol, an intermediate step in ubiquinone biosynthesis. The protein is 3-octaprenyl-4-hydroxybenzoate carboxy-lyase of Shigella flexneri.